Reading from the N-terminus, the 692-residue chain is Formate hydrogenlyase transcriptional activator FhlA (692 aa).

The GAF domain maps to 202-344 (DMDELVSEVA…QIAERVAIAV (143 aa)). A Sigma-54 factor interaction domain is found at 381-610 (IIGRSEAMYS…LENVIERAVL (230 aa)). Residues 409–416 (GETGTGKE) and 472–481 (ADKSSLFLDE) each bind ATP. The H-T-H motif DNA-binding region spans 663-682 (PKGAAQRLGLKRTTLLSRMK).

Its function is as follows. Required for induction of expression of the formate dehydrogenase H and hydrogenase-3 structural genes. Also activates expression of hyf operon (encodes the silent hydrogenase-4 gene cluster). The sequence is that of Formate hydrogenlyase transcriptional activator FhlA (fhlA) from Escherichia coli (strain K12).